The chain runs to 84 residues: MAHKKAGGSTRNGRDSESKRLGVKRFGGESVLAGNIIVRQRGTKFHAGVNVGIGRDHTLFALTDGKVKFEVKGPNNRKFVSIED.

The interval 1–22 (MAHKKAGGSTRNGRDSESKRLG) is disordered.

The protein belongs to the bacterial ribosomal protein bL27 family.

In Shewanella amazonensis (strain ATCC BAA-1098 / SB2B), this protein is Large ribosomal subunit protein bL27.